A 300-amino-acid chain; its full sequence is Neutral protease NprE (300 aa).

Aspartate 139 is a binding site for Ca(2+). Position 143 (histidine 143) interacts with Zn(2+). Glutamate 144 is a catalytic residue. Zn(2+) contacts are provided by histidine 147 and glutamate 167. 4 residues coordinate Ca(2+): aspartate 178, aspartate 181, aspartate 183, and glutamate 186. Histidine 228 acts as the Proton donor in catalysis.

Belongs to the peptidase M4 family. Ca(2+) serves as cofactor. Requires Zn(2+) as cofactor.

It is found in the secreted. It carries out the reaction Similar, but not identical, to that of thermolysin.. Its function is as follows. Extracellular zinc metalloprotease. This is Neutral protease NprE (nprE) from Bacillus pumilus (Bacillus mesentericus).